We begin with the raw amino-acid sequence, 566 residues long: MNTELFGACLLLMLPEDIFVVISRFLSPSDICNLILCGKSLRALVDSEKTWLVQCEEVKVLPLLEIVQWRIGISSYKALCRFLVEVVKPLLGIWVQQNPELGNVVYVMPGFLSVVGCRIIPQKVAPSWIQEDRVKWSPVFEIICGFDGSNGFFLHGRDKEGSCLYPGFVMGIEKNCDVLQLEVVPRQEKSSCNEIERGASRKEGEIPFWMLAFSDRKHLLNIVTNHVGLHVVEPLNEMLFPTLKDDEVKLNERRTILLKMHKFGGNWKNMNLEEDGQLSYNPMQVKINEMLENLDDDFFFELHEDLIEVTPTESTYVLRKSSSSKNTTPSQSEIRHSNRKSFLSSGDTFGLGLKASYTEMSYYKGWPDMYVHHFLLYKLPVKKAVDHETYAGLWGGTFGWPAGKCPKGKTEKSLYLLMLTYEKEYSERVLIGTKILEGNRLVSRPNGTTMFVVKIDTPSLEPFPVDADEIHFENSYSGKGVTDGYGFRYLGSKPGSLFVITNDFLAFVWKDTKTMITLHRLNLTEILKKGLGSCVPPSHPMKNFTYMRTSSMNEFTSSSTDLCYSD.

Residues 8–54 form the F-box domain; it reads ACLLLMLPEDIFVVISRFLSPSDICNLILCGKSLRALVDSEKTWLVQ. Positions 318-338 are disordered; it reads LRKSSSSKNTTPSQSEIRHSN. Positions 320-332 are enriched in low complexity; sequence KSSSSKNTTPSQS.

The sequence is that of Probable F-box protein At5g39490 from Arabidopsis thaliana (Mouse-ear cress).